Here is a 792-residue protein sequence, read N- to C-terminus: Phenylalanine--tRNA ligase beta subunit (792 aa).

The region spanning L39–A154 is the tRNA-binding domain. A B5 domain is found at R403–P480. Mg(2+) contacts are provided by D456, D462, E465, and E466. Residues A695–N791 enclose the FDX-ACB domain.

The protein belongs to the phenylalanyl-tRNA synthetase beta subunit family. Type 1 subfamily. Tetramer of two alpha and two beta subunits. Mg(2+) serves as cofactor.

It is found in the cytoplasm. The catalysed reaction is tRNA(Phe) + L-phenylalanine + ATP = L-phenylalanyl-tRNA(Phe) + AMP + diphosphate + H(+). This Chlamydia pneumoniae (Chlamydophila pneumoniae) protein is Phenylalanine--tRNA ligase beta subunit (pheT).